The chain runs to 706 residues: MARTTPINRYRNIGICAHVDAGKTTTTERILFYTGLSHKMGEVHDGAATTDWMVQEQERGITITSAAVTTFWQGSRGQYDNYRVNVIDTPGHVDFTIEVERSLRVLDGAVVVFCGTSGVEPQSETVWRQANKYGVPRIVYVNKMDRQGANFLRVVGQIKQRLGHTPVPVQLAIGSEENFAGQIDLIKMKAIYWNDDDKGTTYREEEIPAELMDLAEEYRSNMIEAAAEANEELMNKYLEGGELTIEEIKAGLRQRTIACEIVPAVCGSSFKNKGVPLVLDAVIDYLPAPTEIPPIQGVNPDNEEQVDERHASDDEPFSALAFKIATDPFVGTLTFTRVYSGVLSSGDSVINSVKGKKERVGRMVQMHANQRDEIKECRAGDIAALIGMKDVTTGDTLCSIEKPIILERMDFPEPVISVAVEPKTKADQEKMGIALGKLAQEDPSFRVQTDEETGQTIISGMGELHLDILVDRMRREFNVEANIGKPQVSYRETITKDNVEIEGKFVRQSGGRGQFGHCWIRFSTPDVDEKGNITEGLVFTNEVVGGVVPKEYIPAIQKGIEEQMKNGVVAGYPLIGLKATVFDGSYHDVDSNEMAFKVAASMATKQLAQKGGGKVLEPIMKVEVVTPEDYMGDVMGDLNRRRGLIQGMEDSVSGKVIRAEVPLGEMFGYATDVRSMSQGRASYSMEFSKYAEAPANIVETLVKKQG.

Residues 8-290 (NRYRNIGICA…AVIDYLPAPT (283 aa)) enclose the tr-type G domain. GTP-binding positions include 17–24 (AHVDAGKT), 88–92 (DTPGH), and 142–145 (NKMD).

It belongs to the TRAFAC class translation factor GTPase superfamily. Classic translation factor GTPase family. EF-G/EF-2 subfamily.

It localises to the cytoplasm. In terms of biological role, catalyzes the GTP-dependent ribosomal translocation step during translation elongation. During this step, the ribosome changes from the pre-translocational (PRE) to the post-translocational (POST) state as the newly formed A-site-bound peptidyl-tRNA and P-site-bound deacylated tRNA move to the P and E sites, respectively. Catalyzes the coordinated movement of the two tRNA molecules, the mRNA and conformational changes in the ribosome. This chain is Elongation factor G, found in Stutzerimonas stutzeri (strain A1501) (Pseudomonas stutzeri).